A 475-amino-acid chain; its full sequence is ISWI one complex protein 4 (475 aa).

Serine 2 carries the phosphoserine modification. A Phosphothreonine modification is found at threonine 9. 3 disordered regions span residues 42 to 84, 181 to 296, and 454 to 475; these read VSVH…DFGE, EEEY…IKYH, and EMDR…KVGA. Serine 65 and serine 73 each carry phosphoserine. Composition is skewed to acidic residues over residues 72-84, 181-193, and 241-252; these read QSEE…DFGE, EEEY…EENE, and ASEEEEEEEEEK. Phosphoserine is present on serine 242. The span at 259–294 shows a compositional bias: basic residues; it reads KRPQRTKTKKVVVSKTKPNPKTKAKKEKPKPPKPIK. Basic and acidic residues predominate over residues 456–475; that stretch reads DREKPSFSEDVKEEESKVGA.

In terms of assembly, component of the ISW1B complex, which at least consists of ISW1, IOC2 and IOC4.

The protein localises to the nucleus. In terms of biological role, functions as a component of the ISW1B complex, which acts in remodeling the chromatin by catalyzing an ATP-dependent alteration in the structure of nucleosomal DNA. The ISW1B complex acts within coding regions to control the amount of RNA polymerase II released into productive elongation and to coordinate elongation with termination and pre-mRNA processing. The protein is ISWI one complex protein 4 (IOC4) of Saccharomyces cerevisiae (strain ATCC 204508 / S288c) (Baker's yeast).